The sequence spans 438 residues: Serine hydroxymethyltransferase (438 aa).

A (6S)-5,6,7,8-tetrahydrofolate-binding site is contributed by 133–135 (GHI). Lys-239 is subject to N6-(pyridoxal phosphate)lysine.

Belongs to the SHMT family. Homodimer. The cofactor is pyridoxal 5'-phosphate.

The protein resides in the cytoplasm. The catalysed reaction is 5,10-methylenetetrahydromethanopterin + glycine + H2O = 5,6,7,8-tetrahydromethanopterin + L-serine. It functions in the pathway amino-acid biosynthesis; glycine biosynthesis; glycine from L-serine: step 1/1. Its function is as follows. Catalyzes the reversible interconversion of serine and glycine with tetrahydromethanopterin (H4MPT) serving as the one-carbon carrier. Also exhibits a pteridine-independent aldolase activity toward beta-hydroxyamino acids, producing glycine and aldehydes, via a retro-aldol mechanism. The protein is Serine hydroxymethyltransferase of Archaeoglobus fulgidus (strain ATCC 49558 / DSM 4304 / JCM 9628 / NBRC 100126 / VC-16).